Consider the following 1131-residue polypeptide: DNA polymerase II large subunit (1131 aa).

It belongs to the archaeal DNA polymerase II family. As to quaternary structure, heterodimer of a large subunit and a small subunit.

It catalyses the reaction DNA(n) + a 2'-deoxyribonucleoside 5'-triphosphate = DNA(n+1) + diphosphate. It carries out the reaction Exonucleolytic cleavage in the 3'- to 5'-direction to yield nucleoside 5'-phosphates.. Its function is as follows. Possesses two activities: a DNA synthesis (polymerase) and an exonucleolytic activity that degrades single-stranded DNA in the 3'- to 5'-direction. Has a template-primer preference which is characteristic of a replicative DNA polymerase. This chain is DNA polymerase II large subunit, found in Methanococcus maripaludis (strain DSM 14266 / JCM 13030 / NBRC 101832 / S2 / LL).